A 418-amino-acid polypeptide reads, in one-letter code: Pentatricopeptide repeat-containing protein At2g18520, mitochondrial (418 aa).

A mitochondrion-targeting transit peptide spans 1–14; it reads MTSSRLYLRFLRRF. PPR repeat units follow at residues 101 to 135, 136 to 166, 173 to 207, 208 to 242, 243 to 276, 277 to 311, 312 to 342, and 343 to 373; these read TETFLSTLIRSYGRASMFDHAMKMFEEMDKLGTPR, TVVSFNALLAACLHSDLFERVPQLFDEFPQR, DKISYGMLIKSYCDSGKPEKAMEIMRDMEVKGVEV, TIIAFTTILGSLYKNGLVDEAESLWIEMVNKGCDL, DNTVYNVRLMNAAKESPERVKELMEEMSSVGLKP, DTVSYNYLMTAYCVKGMMSEAKKVYEGLEQPNAAT, FRTLIFHLCINGLYDQGLTVFKKSAIVHKIP, and DFKTCKHLTEGLVKNNRMEDARGVARIVKKK.

The protein belongs to the PPR family. P subfamily.

The protein resides in the mitochondrion. The protein is Pentatricopeptide repeat-containing protein At2g18520, mitochondrial of Arabidopsis thaliana (Mouse-ear cress).